The chain runs to 103 residues: OMEGA-ectatommitoxin(02)-Rm1d (103 aa).

An N-terminal signal peptide occupies residues 1–30 (MKDSYISIVIAYLMVTFILVSSMPIEGEKR). Intrachain disulfides connect Cys39/Cys54, Cys49/Cys70, and Cys72/Cys81. The region spanning 43–82 (LNDENYCFNGKCVHLVAQDEPGKPYYSCICDEFYIGERCG) is the EGF-like domain.

It belongs to the EGF domain peptide family. Expressed by the venom gland.

It localises to the secreted. Its function is as follows. Ant peptide with probable defensive activity which acts as a potent agonist of the mammalian epidermal growth factor receptor (EGFR). Mimics, both structurally and functionally, vertebrate epidermal growth factor (EGF) peptide hormones. In vivo, intraplantar injection in mice causes long-lasting (several days) hypersensitivity of the injected paw to both mechanical and thermal stimuli. Its long-lasting effect is unusual for venom toxins whose effects are usually immediate. One possible explanation is that it would reduce the duration of a nest attack, discourage future attacks, or enhance the actions of subsequent exposure to other pain-inducing venom peptides. The protein is OMEGA-ectatommitoxin(02)-Rm1d of Rhytidoponera metallica (Australian green-headed ant).